The primary structure comprises 129 residues: Ig lambda-1 chain V region S43 (129 aa).

The signal sequence occupies residues 1–19 (MAWISLILSLLALSSGAIS). Pyrrolidone carboxylic acid is present on Gln20. Positions 20-125 (QAVVTQESAL…HWVFGGGTKL (106 aa)) constitute an Ig-like domain.

This is Ig lambda-1 chain V region S43 from Mus musculus (Mouse).